The sequence spans 188 residues: Pyridoxal 5'-phosphate synthase subunit PdxT (188 aa).

46–48 (GES) is a binding site for L-glutamine. The active-site Nucleophile is cysteine 78. L-glutamine is bound by residues arginine 105 and 134–135 (IR). Residues histidine 170 and glutamate 172 each act as charge relay system in the active site.

It belongs to the glutaminase PdxT/SNO family. As to quaternary structure, in the presence of PdxS, forms a dodecamer of heterodimers. Only shows activity in the heterodimer.

It catalyses the reaction aldehydo-D-ribose 5-phosphate + D-glyceraldehyde 3-phosphate + L-glutamine = pyridoxal 5'-phosphate + L-glutamate + phosphate + 3 H2O + H(+). It carries out the reaction L-glutamine + H2O = L-glutamate + NH4(+). It participates in cofactor biosynthesis; pyridoxal 5'-phosphate biosynthesis. Catalyzes the hydrolysis of glutamine to glutamate and ammonia as part of the biosynthesis of pyridoxal 5'-phosphate. The resulting ammonia molecule is channeled to the active site of PdxS. In Moorella thermoacetica (strain ATCC 39073 / JCM 9320), this protein is Pyridoxal 5'-phosphate synthase subunit PdxT.